The primary structure comprises 413 residues: THAP domain-containing protein 5 (413 aa).

The segment at M1–F85 adopts a THAP-type zinc-finger fold. The segment at I84–K118 is disordered. Over residues E102–K118 the composition is skewed to basic and acidic residues. A coiled-coil region spans residues R375–I399.

Its subcellular location is the nucleus. The polypeptide is THAP domain-containing protein 5 (THAP5) (Gallus gallus (Chicken)).